The chain runs to 807 residues: Spondin-1 (807 aa).

A signal peptide spans 1–28 (MRLSPAPLRLSRGPALLALALPLAAALA). Residues 29–194 (FSDETLDKVA…DPTLDGVTDR (166 aa)) form the Reelin domain. 17 disulfide bridges follow: Cys-44–Cys-128, Cys-156–Cys-182, Cys-199–Cys-336, Cys-200–Cys-340, Cys-202–Cys-415, Cys-443–Cys-480, Cys-454–Cys-489, Cys-459–Cys-494, Cys-502–Cys-538, Cys-513–Cys-517, Cys-548–Cys-554, Cys-559–Cys-595, Cys-570–Cys-574, Cys-605–Cys-610, Cys-615–Cys-650, Cys-626–Cys-630, and Cys-660–Cys-665. The Spondin domain occupies 195-388 (PILDCCACGT…LTSLDHPQSP (194 aa)). A glycan (N-linked (GlcNAc...) asparagine) is linked at Asn-214. Positions 325, 354, and 358 each coordinate Ca(2+). TSP type-1 domains are found at residues 442–495 (TCIY…PGCS), 501–555 (TCTM…EECS), 558–611 (SCLV…PECH), 614–666 (PCLL…PECP), and 668–721 (DCEL…RKCL). Residue Asn-681 is glycosylated (N-linked (GlcNAc...) asparagine). Positions 732–746 (REARESRRSEQLREE) are enriched in basic and acidic residues. The segment at 732 to 752 (REARESRRSEQLREESDGEQF) is disordered. The TSP type-1 6 domain maps to 754–806 (GCRMRPWTAWSECTKLCGGGIQERYMTVKKRFKSSQFTSCKDKKEIRACNVHP).

Binds to the central extracellular domain of APP and inhibits beta-secretase cleavage of APP. Expressed at high levels in the floor plate.

It is found in the secreted. The protein localises to the extracellular space. It localises to the extracellular matrix. Cell adhesion protein that promotes the attachment of spinal cord and sensory neuron cells and the outgrowth of neurites in vitro. May contribute to the growth and guidance of axons in both the spinal cord and the PNS. This is Spondin-1 (Spon1) from Rattus norvegicus (Rat).